The primary structure comprises 734 residues: Phosphoribosylformylglycinamidine synthase subunit PurL (734 aa).

Histidine 46 is an active-site residue. ATP contacts are provided by tyrosine 49 and lysine 88. Glutamate 90 is a Mg(2+) binding site. Residues 91–94 (SHNH) and arginine 113 contribute to the substrate site. Residue histidine 92 is the Proton acceptor of the active site. Residue aspartate 114 participates in Mg(2+) binding. Glutamine 237 serves as a coordination point for substrate. Residue aspartate 265 participates in Mg(2+) binding. 309-311 (ESQ) provides a ligand contact to substrate. Residues aspartate 489 and glycine 526 each contribute to the ATP site. Asparagine 527 is a binding site for Mg(2+). Serine 529 lines the substrate pocket.

This sequence belongs to the FGAMS family. As to quaternary structure, monomer. Part of the FGAM synthase complex composed of 1 PurL, 1 PurQ and 2 PurS subunits.

It is found in the cytoplasm. The catalysed reaction is N(2)-formyl-N(1)-(5-phospho-beta-D-ribosyl)glycinamide + L-glutamine + ATP + H2O = 2-formamido-N(1)-(5-O-phospho-beta-D-ribosyl)acetamidine + L-glutamate + ADP + phosphate + H(+). It functions in the pathway purine metabolism; IMP biosynthesis via de novo pathway; 5-amino-1-(5-phospho-D-ribosyl)imidazole from N(2)-formyl-N(1)-(5-phospho-D-ribosyl)glycinamide: step 1/2. Part of the phosphoribosylformylglycinamidine synthase complex involved in the purines biosynthetic pathway. Catalyzes the ATP-dependent conversion of formylglycinamide ribonucleotide (FGAR) and glutamine to yield formylglycinamidine ribonucleotide (FGAM) and glutamate. The FGAM synthase complex is composed of three subunits. PurQ produces an ammonia molecule by converting glutamine to glutamate. PurL transfers the ammonia molecule to FGAR to form FGAM in an ATP-dependent manner. PurS interacts with PurQ and PurL and is thought to assist in the transfer of the ammonia molecule from PurQ to PurL. This chain is Phosphoribosylformylglycinamidine synthase subunit PurL, found in Gluconobacter oxydans (strain 621H) (Gluconobacter suboxydans).